We begin with the raw amino-acid sequence, 197 residues long: Protein LURP-one-related 9 (197 aa).

It belongs to the LOR family.

Functionally, might be related to the phospholipid scramblase and tubby-like superfamily of membrane tethered transcription factors. The protein is Protein LURP-one-related 9 of Arabidopsis thaliana (Mouse-ear cress).